The primary structure comprises 158 residues: 2-C-methyl-D-erythritol 2,4-cyclodiphosphate synthase (158 aa).

A divalent metal cation-binding residues include aspartate 9 and histidine 11. 4-CDP-2-C-methyl-D-erythritol 2-phosphate contacts are provided by residues 9 to 11 (DAH) and 35 to 36 (HS). Histidine 43 lines the a divalent metal cation pocket. Residues 57–59 (DIG), 62–66 (FPDTD), 133–136 (TTTE), phenylalanine 140, and arginine 143 each bind 4-CDP-2-C-methyl-D-erythritol 2-phosphate.

Belongs to the IspF family. In terms of assembly, homotrimer. Requires a divalent metal cation as cofactor.

It catalyses the reaction 4-CDP-2-C-methyl-D-erythritol 2-phosphate = 2-C-methyl-D-erythritol 2,4-cyclic diphosphate + CMP. It participates in isoprenoid biosynthesis; isopentenyl diphosphate biosynthesis via DXP pathway; isopentenyl diphosphate from 1-deoxy-D-xylulose 5-phosphate: step 4/6. Involved in the biosynthesis of isopentenyl diphosphate (IPP) and dimethylallyl diphosphate (DMAPP), two major building blocks of isoprenoid compounds. Catalyzes the conversion of 4-diphosphocytidyl-2-C-methyl-D-erythritol 2-phosphate (CDP-ME2P) to 2-C-methyl-D-erythritol 2,4-cyclodiphosphate (ME-CPP) with a corresponding release of cytidine 5-monophosphate (CMP). This is 2-C-methyl-D-erythritol 2,4-cyclodiphosphate synthase from Methylococcus capsulatus (strain ATCC 33009 / NCIMB 11132 / Bath).